The chain runs to 640 residues: DNA gyrase subunit B (640 aa).

One can recognise a Toprim domain in the interval 423 to 537 (AELYIVEGDS…NGNIYIAQPP (115 aa)). The Mg(2+) site is built by glutamate 429, aspartate 502, and aspartate 504.

The protein belongs to the type II topoisomerase GyrB family. In terms of assembly, heterotetramer, composed of two GyrA and two GyrB chains. In the heterotetramer, GyrA contains the active site tyrosine that forms a transient covalent intermediate with DNA, while GyrB binds cofactors and catalyzes ATP hydrolysis. The cofactor is Mg(2+). Requires Mn(2+) as cofactor. Ca(2+) is required as a cofactor.

It localises to the cytoplasm. It catalyses the reaction ATP-dependent breakage, passage and rejoining of double-stranded DNA.. Its function is as follows. A type II topoisomerase that negatively supercoils closed circular double-stranded (ds) DNA in an ATP-dependent manner to modulate DNA topology and maintain chromosomes in an underwound state. Negative supercoiling favors strand separation, and DNA replication, transcription, recombination and repair, all of which involve strand separation. Also able to catalyze the interconversion of other topological isomers of dsDNA rings, including catenanes and knotted rings. Type II topoisomerases break and join 2 DNA strands simultaneously in an ATP-dependent manner. This is DNA gyrase subunit B from Spiroplasma citri.